The following is a 455-amino-acid chain: MTNFSRSKSTGTIGFPEFKPTRPGPDKYENIHNDDDEYEEGHSTTSTDYYDASTPLSSHASRSGNGSGSGQLTVVDLLAAVLRKSLVMSCAMERGEDDVVASMDIGWPTEVKHVSHVTFDRFNGFLGLPSELEPEVPPRAPSASVSVFGVSAKSMQCSYDDRGNSVPTILLRMQKRLYTEGGLKAEGIFRINPDNGKEEHVRRQLNCGVVPRGIDVHCLAGLIKAWFRELPTGVLDVLTPEQVMRCNTEEDCSRLVILLPPVESAILDWAIGLMADVVEHEQFNKMNARNVAMVFAPNMTQMADPLTALIHAVQVMNFLKTLILMNLKERENADAKARWLKKQTSDPSEEWESQHSEILSPEKPNNNNPKFLRVATLCRLEADNEEEFWNIKKRNDHEGVLDTSSGNGNIGPVQRLCKHPLFQLSKSTKKAFVSNRDEGRKGREAWSSRLSSLPW.

Polar residues predominate over residues 1–12; that stretch reads MTNFSRSKSTGT. The interval 1–68 is disordered; the sequence is MTNFSRSKST…HASRSGNGSG (68 aa). Positions 24 to 33 are enriched in basic and acidic residues; it reads GPDKYENIHN. Residues 43–54 show a composition bias toward low complexity; it reads STTSTDYYDAST. Residues 55 to 64 show a composition bias toward polar residues; it reads PLSSHASRSG. The CRIB domain maps to 105-118; sequence IGWPTEVKHVSHVT. Residues 153 to 331 enclose the Rho-GAP domain; that stretch reads KSMQCSYDDR…LILMNLKERE (179 aa). Disordered stretches follow at residues 342–366 and 432–455; these read KQTS…KPNN and FVSN…SLPW. Residues 435-446 show a composition bias toward basic and acidic residues; sequence NRDEGRKGREAW.

As to expression, expressed in differentiating xylem cells.

Its subcellular location is the cell membrane. In terms of biological role, acts as a GTPase activator for the Rac-type GTPase by converting it to an inactive GDP-bound state. Involved in secondary wall pattern formation. In association with ROPGEF4, mediates local activation of ARAC10/ROP11 to initiate the distinct pattern of secondary cell walls in xylem cells. The chain is Rho GTPase-activating protein 3 (ROPGAP3) from Arabidopsis thaliana (Mouse-ear cress).